Here is a 362-residue protein sequence, read N- to C-terminus: Methylthioribose-1-phosphate isomerase (362 aa).

Residue aspartate 252 is the Proton donor of the active site.

The protein belongs to the eIF-2B alpha/beta/delta subunits family. MtnA subfamily.

Its subcellular location is the cytoplasm. The protein resides in the nucleus. The catalysed reaction is 5-(methylsulfanyl)-alpha-D-ribose 1-phosphate = 5-(methylsulfanyl)-D-ribulose 1-phosphate. Its pathway is amino-acid biosynthesis; L-methionine biosynthesis via salvage pathway; L-methionine from S-methyl-5-thio-alpha-D-ribose 1-phosphate: step 1/6. Catalyzes the interconversion of methylthioribose-1-phosphate (MTR-1-P) into methylthioribulose-1-phosphate (MTRu-1-P). The sequence is that of Methylthioribose-1-phosphate isomerase from Drosophila virilis (Fruit fly).